A 378-amino-acid polypeptide reads, in one-letter code: Succinyl-diaminopimelate desuccinylase (378 aa).

Residue histidine 68 participates in Zn(2+) binding. Aspartate 70 is an active-site residue. Aspartate 101 contributes to the Zn(2+) binding site. The Proton acceptor role is filled by glutamate 135. Zn(2+) is bound by residues glutamate 136, glutamate 164, and histidine 350.

Belongs to the peptidase M20A family. DapE subfamily. In terms of assembly, homodimer. Zn(2+) serves as cofactor. It depends on Co(2+) as a cofactor.

It carries out the reaction N-succinyl-(2S,6S)-2,6-diaminopimelate + H2O = (2S,6S)-2,6-diaminopimelate + succinate. It functions in the pathway amino-acid biosynthesis; L-lysine biosynthesis via DAP pathway; LL-2,6-diaminopimelate from (S)-tetrahydrodipicolinate (succinylase route): step 3/3. Functionally, catalyzes the hydrolysis of N-succinyl-L,L-diaminopimelic acid (SDAP), forming succinate and LL-2,6-diaminopimelate (DAP), an intermediate involved in the bacterial biosynthesis of lysine and meso-diaminopimelic acid, an essential component of bacterial cell walls. In Acinetobacter baumannii (strain ACICU), this protein is Succinyl-diaminopimelate desuccinylase.